The following is a 206-amino-acid chain: Ribosomal RNA small subunit methyltransferase G (206 aa).

S-adenosyl-L-methionine is bound by residues Gly-71, Phe-76, 122–123, and Arg-135; that span reads AE.

The protein belongs to the methyltransferase superfamily. RNA methyltransferase RsmG family.

It localises to the cytoplasm. Its function is as follows. Specifically methylates the N7 position of a guanine in 16S rRNA. The chain is Ribosomal RNA small subunit methyltransferase G from Bacteroides thetaiotaomicron (strain ATCC 29148 / DSM 2079 / JCM 5827 / CCUG 10774 / NCTC 10582 / VPI-5482 / E50).